Consider the following 415-residue polypeptide: Probable G-protein coupled receptor 19 (415 aa).

Residues 1-69 (MGFDHRMETD…LNPGEVATAS (69 aa)) are Extracellular-facing. N-linked (GlcNAc...) asparagine glycosylation is found at Asn25 and Asn52. Residues 70–90 (IFFGALWLFSIFGNSLVCLVI) traverse the membrane as a helical segment. Topologically, residues 91-102 (HRSRRTQSTTNY) are cytoplasmic. Residues 103-123 (FVVSMACADLLISVASTPFVV) form a helical membrane-spanning segment. The Extracellular segment spans residues 124–152 (LQFTTGRWTLGSAMCKVVRYFQYLTPGVQ). Cys138 and Cys210 form a disulfide bridge. The helical transmembrane segment at 153–173 (IYVLLSICIDRFYTIVYPLSF) threads the bilayer. Residues 174-182 (KVSREKAKR) are Cytoplasmic-facing. Residues 183–203 (MIAASWILDAAFVTPVFFFYG) traverse the membrane as a helical segment. Topologically, residues 204-221 (SNWDSHCNYFLPPSWEGT) are extracellular. The helical transmembrane segment at 222-242 (AYTVIHFLVGFVIPSVLIILF) threads the bilayer. Residues 243–277 (YQKVIKYIWRIGTDGRTLRRTMNIVPRTKVKTVKM) are Cytoplasmic-facing. A helical membrane pass occupies residues 278–298 (FLLLNLVFLFSWLPFHVAQLW). At 299–309 (HPHEQDYRKSS) the chain is on the extracellular side. The helical transmembrane segment at 310–332 (LVFTAVTWVSFSSSASKPTLYSI) threads the bilayer. Residues 333–415 (YNANFRRGMK…INSNPPNTFV (83 aa)) are Cytoplasmic-facing.

The protein belongs to the G-protein coupled receptor 1 family. Abundant expression in the brain.

It localises to the cell membrane. In terms of biological role, G-protein coupled receptor that plays a role in the regulation of circadian rhythms and energy metabolism. Participates in maintaining proper circadian gene expression in the suprachiasmatic nucleus (SCN), the locus of the master circadian clock in the brain. May function as a coordinator of aging-associated metabolic dysfunction, stress response, DNA integrity management, and eventual senescence. Upon binding to adropin, modulates mitochondrial energy metabolism via the p44/42-PDK4 signaling pathway, influencing pyruvate dehydrogenase activity. This chain is Probable G-protein coupled receptor 19 (Gpr19), found in Rattus norvegicus (Rat).